Consider the following 509-residue polypeptide: tRNA-2-methylthio-N(6)-dimethylallyladenosine synthase (509 aa).

The segment covering 1–15 has biased composition (polar residues); sequence MNEQQRLASQQVNSS. Positions 1–23 are disordered; it reads MNEQQRLASQQVNSSTKKEEKDY. The MTTase N-terminal domain maps to 66–184; that stretch reads RKFYIRTYGC…LPYILKDAMF (119 aa). 6 residues coordinate [4Fe-4S] cluster: cysteine 75, cysteine 111, cysteine 145, cysteine 221, cysteine 225, and cysteine 228. The Radical SAM core domain occupies 207–437; that stretch reads RRGDIKAWVN…NALVNKLAIE (231 aa). The 64-residue stretch at 440–503 folds into the TRAM domain; the sequence is DRYKGQIVEV…TWSLNGELVE (64 aa).

Belongs to the methylthiotransferase family. MiaB subfamily. As to quaternary structure, monomer. It depends on [4Fe-4S] cluster as a cofactor.

The protein resides in the cytoplasm. The catalysed reaction is N(6)-dimethylallyladenosine(37) in tRNA + (sulfur carrier)-SH + AH2 + 2 S-adenosyl-L-methionine = 2-methylsulfanyl-N(6)-dimethylallyladenosine(37) in tRNA + (sulfur carrier)-H + 5'-deoxyadenosine + L-methionine + A + S-adenosyl-L-homocysteine + 2 H(+). Functionally, catalyzes the methylthiolation of N6-(dimethylallyl)adenosine (i(6)A), leading to the formation of 2-methylthio-N6-(dimethylallyl)adenosine (ms(2)i(6)A) at position 37 in tRNAs that read codons beginning with uridine. The polypeptide is tRNA-2-methylthio-N(6)-dimethylallyladenosine synthase (Bacillus anthracis).